An 89-amino-acid polypeptide reads, in one-letter code: LYR motif-containing protein 4 (89 aa).

Belongs to the complex I LYR family.

The protein resides in the mitochondrion. The protein localises to the nucleus. It functions in the pathway cofactor biosynthesis; iron-sulfur cluster biosynthesis. Its function is as follows. Required for nuclear and mitochondrial iron-sulfur protein biosynthesis. This is LYR motif-containing protein 4 (lyrm4) from Danio rerio (Zebrafish).